A 621-amino-acid chain; its full sequence is Chaperone protein HscA homolog (621 aa).

It belongs to the heat shock protein 70 family.

In terms of biological role, chaperone involved in the maturation of iron-sulfur cluster-containing proteins. Has a low intrinsic ATPase activity which is markedly stimulated by HscB. The polypeptide is Chaperone protein HscA homolog (Cupriavidus necator (strain ATCC 17699 / DSM 428 / KCTC 22496 / NCIMB 10442 / H16 / Stanier 337) (Ralstonia eutropha)).